A 350-amino-acid polypeptide reads, in one-letter code: Probable dual-specificity RNA methyltransferase RlmN (350 aa).

E98 functions as the Proton acceptor in the catalytic mechanism. Residues H104–D334 enclose the Radical SAM core domain. C111 and C339 form a disulfide bridge. Positions 118, 122, and 125 each coordinate [4Fe-4S] cluster. S-adenosyl-L-methionine contacts are provided by residues G165–E166, S197, S220–H222, and N296. The active-site S-methylcysteine intermediate is C339.

This sequence belongs to the radical SAM superfamily. RlmN family. [4Fe-4S] cluster serves as cofactor.

Its subcellular location is the cytoplasm. It carries out the reaction adenosine(2503) in 23S rRNA + 2 reduced [2Fe-2S]-[ferredoxin] + 2 S-adenosyl-L-methionine = 2-methyladenosine(2503) in 23S rRNA + 5'-deoxyadenosine + L-methionine + 2 oxidized [2Fe-2S]-[ferredoxin] + S-adenosyl-L-homocysteine. The catalysed reaction is adenosine(37) in tRNA + 2 reduced [2Fe-2S]-[ferredoxin] + 2 S-adenosyl-L-methionine = 2-methyladenosine(37) in tRNA + 5'-deoxyadenosine + L-methionine + 2 oxidized [2Fe-2S]-[ferredoxin] + S-adenosyl-L-homocysteine. Specifically methylates position 2 of adenine 2503 in 23S rRNA and position 2 of adenine 37 in tRNAs. This chain is Probable dual-specificity RNA methyltransferase RlmN, found in Desulforamulus reducens (strain ATCC BAA-1160 / DSM 100696 / MI-1) (Desulfotomaculum reducens).